We begin with the raw amino-acid sequence, 351 residues long: Phosphoribosylformylglycinamidine cyclo-ligase (351 aa).

It belongs to the AIR synthase family.

The protein resides in the cytoplasm. It catalyses the reaction 2-formamido-N(1)-(5-O-phospho-beta-D-ribosyl)acetamidine + ATP = 5-amino-1-(5-phospho-beta-D-ribosyl)imidazole + ADP + phosphate + H(+). Its pathway is purine metabolism; IMP biosynthesis via de novo pathway; 5-amino-1-(5-phospho-D-ribosyl)imidazole from N(2)-formyl-N(1)-(5-phospho-D-ribosyl)glycinamide: step 2/2. This is Phosphoribosylformylglycinamidine cyclo-ligase from Xylella fastidiosa (strain 9a5c).